A 323-amino-acid chain; its full sequence is Mediator of RNA polymerase II transcription subunit 4 (323 aa).

The segment at 1–36 (MLPFKKADSPFKSNPVSRVGSSTRLNQLGNIKSNPT) is disordered. Residues 11–36 (FKSNPVSRVGSSTRLNQLGNIKSNPT) are compositionally biased toward polar residues. The stretch at 79–167 (MVQKVNEYER…VSYRNELKKL (89 aa)) forms a coiled coil. 2 stretches are compositionally biased toward basic and acidic residues: residues 241-262 (HELG…KVDH) and 282-303 (DEQR…KEEQ). Residues 241–323 (HELGETDKEN…LFDPDDEYSD (83 aa)) form a disordered region.

It belongs to the Mediator complex subunit 4 family. Component of the Mediator complex.

Its subcellular location is the nucleus. Component of the Mediator complex, a coactivator involved in the regulated transcription of nearly all RNA polymerase II-dependent genes. Mediator functions as a bridge to convey information from gene-specific regulatory proteins to the basal RNA polymerase II transcription machinery. Mediator is recruited to promoters by direct interactions with regulatory proteins and serves as a scaffold for the assembly of a functional preinitiation complex with RNA polymerase II and the general transcription factors. The sequence is that of Mediator of RNA polymerase II transcription subunit 4 (MED4) from Candida albicans (strain SC5314 / ATCC MYA-2876) (Yeast).